The following is a 510-amino-acid chain: Maturase K (510 aa).

It belongs to the intron maturase 2 family. MatK subfamily.

Its subcellular location is the plastid. It localises to the chloroplast. Functionally, usually encoded in the trnK tRNA gene intron. Probably assists in splicing its own and other chloroplast group II introns. This Grahamia bracteata protein is Maturase K.